Reading from the N-terminus, the 106-residue chain is Small ribosomal subunit protein bS16 (106 aa).

It belongs to the bacterial ribosomal protein bS16 family.

This chain is Small ribosomal subunit protein bS16, found in Wolbachia sp. subsp. Brugia malayi (strain TRS).